Consider the following 257-residue polypeptide: tRNA (guanine-N(7)-)-methyltransferase (257 aa).

A disordered region spans residues 1-42 (MTVVVSDHQNPRPPGDDAAPLGRTGNRDRPPGSFFGRRKGHR). S-adenosyl-L-methionine is bound by residues Glu-84, Glu-109, Asp-136, and Asp-158. Asp-158 is a catalytic residue. Positions 162 and 194 each coordinate substrate.

It belongs to the class I-like SAM-binding methyltransferase superfamily. TrmB family.

The enzyme catalyses guanosine(46) in tRNA + S-adenosyl-L-methionine = N(7)-methylguanosine(46) in tRNA + S-adenosyl-L-homocysteine. It participates in tRNA modification; N(7)-methylguanine-tRNA biosynthesis. Catalyzes the formation of N(7)-methylguanine at position 46 (m7G46) in tRNA. The polypeptide is tRNA (guanine-N(7)-)-methyltransferase (Nitrobacter winogradskyi (strain ATCC 25391 / DSM 10237 / CIP 104748 / NCIMB 11846 / Nb-255)).